Consider the following 466-residue polypeptide: Histone acetyltransferase type B catalytic subunit DDB_G0275159 (466 aa).

The region spanning 169 to 366 (AVFRYHEKLQ…FRIAIKKRLY (198 aa)) is the N-acetyltransferase domain. Acetyl-CoA is bound by residues 240–242 (YLI) and 247–253 (QRMGHGK). Residue Glu279 is the Proton donor/acceptor of the active site. The stretch at 372 to 459 (DSEQIEKMKQ…LEENYHKTLS (88 aa)) forms a coiled coil.

Belongs to the HAT1 family.

It catalyses the reaction L-lysyl-[protein] + acetyl-CoA = N(6)-acetyl-L-lysyl-[protein] + CoA + H(+). This chain is Histone acetyltransferase type B catalytic subunit DDB_G0275159, found in Dictyostelium discoideum (Social amoeba).